The following is a 706-amino-acid chain: ATP-dependent zinc metalloprotease FtsH (706 aa).

Residues 1 to 17 show a composition bias toward polar residues; that stretch reads MAKNSLKPSNPYNSEPE. Positions 1–20 are disordered; the sequence is MAKNSLKPSNPYNSEPETPQ. At 1 to 24 the chain is on the cytoplasmic side; the sequence is MAKNSLKPSNPYNSEPETPQPRPK. Residues 25 to 45 traverse the membrane as a helical segment; sequence LPMIYYVVVIALLIGLQLAFF. At 46–142 the chain is on the periplasmic side; the sequence is WSGSSREIPY…RYEGSPGTTW (97 aa). A disordered region spans residues 88–111; it reads GLPKQEEGNDTTRKLLPGAKTPEN. Over residues 91–100 the composition is skewed to basic and acidic residues; that stretch reads KQEEGNDTTR. The chain crosses the membrane as a helical span at residues 143-163; it reads ISELIQWVLPFALLFGLYFFI. The Cytoplasmic portion of the chain corresponds to 164 to 706; that stretch reads FRRMGAGGPG…LRQSRNVSDN (543 aa). 239 to 246 is a binding site for ATP; sequence GPPGTGKT. Zn(2+) is bound at residue His-462. Glu-463 is a catalytic residue. His-466 and Asp-539 together coordinate Zn(2+). Residues 641-681 form a disordered region; that stretch reads RPGGQEEDSGEVDCSKKSAENGMVAHEPETTADAESTEKVG.

In the central section; belongs to the AAA ATPase family. It in the C-terminal section; belongs to the peptidase M41 family. In terms of assembly, homohexamer. Requires Zn(2+) as cofactor.

It localises to the cell inner membrane. In terms of biological role, acts as a processive, ATP-dependent zinc metallopeptidase for both cytoplasmic and membrane proteins. Plays a role in the quality control of integral membrane proteins. The chain is ATP-dependent zinc metalloprotease FtsH from Chlorobium luteolum (strain DSM 273 / BCRC 81028 / 2530) (Pelodictyon luteolum).